The chain runs to 302 residues: UTP--glucose-1-phosphate uridylyltransferase (302 aa).

The protein belongs to the UDPGP type 2 family. In terms of assembly, homotetramer or homopentamer. Requires Mg(2+) as cofactor.

It catalyses the reaction alpha-D-glucose 1-phosphate + UTP + H(+) = UDP-alpha-D-glucose + diphosphate. Functionally, may play a role in stationary phase survival. In Escherichia coli O157:H7, this protein is UTP--glucose-1-phosphate uridylyltransferase (galU).